The chain runs to 205 residues: Interleukin-6 (205 aa).

The first 21 residues, 1–21, serve as a signal peptide directing secretion; that stretch reads RFTSAFSLGLLLVTATAFPTP. C64 and C70 are disulfide-bonded. Phosphoserine is present on S73. C93 and C103 are disulfide-bonded. N164 carries N-linked (GlcNAc...) asparagine glycosylation.

The protein belongs to the IL-6 superfamily. Component of a hexamer of two molecules each of IL6, IL6R and IL6ST; first binds to IL6R to associate with the signaling subunit IL6ST. Interacts with IL6R (via the N-terminal ectodomain); this interaction may be affected by IL6R-binding with SORL1, hence decreasing IL6 cis signaling. Interacts with SORL1 (via the N-terminal ectodomain); this interaction leads to IL6 internalization and lysosomal degradation. May form a trimeric complex with the soluble SORL1 ectodomain and soluble IL6R receptor; this interaction might stabilize circulating IL6, hence promoting IL6 trans signaling.

Its subcellular location is the secreted. Functionally, cytokine with a wide variety of biological functions in immunity, tissue regeneration, and metabolism. Binds to IL6R, then the complex associates to the signaling subunit IL6ST/gp130 to trigger the intracellular IL6-signaling pathway. The interaction with the membrane-bound IL6R and IL6ST stimulates 'classic signaling', whereas the binding of IL6 and soluble IL6R to IL6ST stimulates 'trans-signaling'. Alternatively, 'cluster signaling' occurs when membrane-bound IL6:IL6R complexes on transmitter cells activate IL6ST receptors on neighboring receiver cells. Its function is as follows. IL6 is a potent inducer of the acute phase response. Rapid production of IL6 contributes to host defense during infection and tissue injury, but excessive IL6 synthesis is involved in disease pathology. In the innate immune response, is synthesized by myeloid cells, such as macrophages and dendritic cells, upon recognition of pathogens through toll-like receptors (TLRs) at the site of infection or tissue injury. In the adaptive immune response, is required for the differentiation of B cells into immunoglobulin-secreting cells. Plays a major role in the differentiation of CD4(+) T cell subsets. Essential factor for the development of T follicular helper (Tfh) cells that are required for the induction of germinal-center formation. Required to drive naive CD4(+) T cells to the Th17 lineage. Also required for proliferation of myeloma cells and the survival of plasmablast cells. Acts as an essential factor in bone homeostasis and on vessels directly or indirectly by induction of VEGF, resulting in increased angiogenesis activity and vascular permeability. Induces, through 'trans-signaling' and synergistically with IL1B and TNF, the production of VEGF. Involved in metabolic controls, is discharged into the bloodstream after muscle contraction increasing lipolysis and improving insulin resistance. 'Trans-signaling' in central nervous system also regulates energy and glucose homeostasis. Mediates, through GLP-1, crosstalk between insulin-sensitive tissues, intestinal L cells and pancreatic islets to adapt to changes in insulin demand. Also acts as a myokine. Plays a protective role during liver injury, being required for maintenance of tissue regeneration. Also has a pivotal role in iron metabolism by regulating HAMP/hepcidin expression upon inflammation or bacterial infection. Through activation of IL6ST-YAP-NOTCH pathway, induces inflammation-induced epithelial regeneration. In Orcinus orca (Killer whale), this protein is Interleukin-6 (IL6).